The sequence spans 251 residues: Hydroxyacylglutathione hydrolase (251 aa).

Zn(2+)-binding residues include His-53, His-55, Asp-57, His-58, His-110, Asp-127, and His-165.

This sequence belongs to the metallo-beta-lactamase superfamily. Glyoxalase II family. In terms of assembly, monomer. Zn(2+) serves as cofactor.

The catalysed reaction is an S-(2-hydroxyacyl)glutathione + H2O = a 2-hydroxy carboxylate + glutathione + H(+). It functions in the pathway secondary metabolite metabolism; methylglyoxal degradation; (R)-lactate from methylglyoxal: step 2/2. Its function is as follows. Thiolesterase that catalyzes the hydrolysis of S-D-lactoyl-glutathione to form glutathione and D-lactic acid. The protein is Hydroxyacylglutathione hydrolase of Enterobacter sp. (strain 638).